The sequence spans 103 residues: Histone H4 (103 aa).

Gly residues predominate over residues methionine 1–glycine 14. Residues methionine 1–arginine 20 are disordered. Serine 2 is modified (N-acetylserine). An N6-acetyllysine modification is found at lysine 17. Residues lysine 17–lysine 21 mediate DNA binding. At lysine 21 the chain carries N6-methyllysine.

Belongs to the histone H4 family. In terms of assembly, the nucleosome is a histone octamer containing two molecules each of H2A, H2B, H3 and H4 assembled in one H3-H4 heterotetramer and two H2A-H2B heterodimers. The octamer wraps approximately 147 bp of DNA.

It localises to the nucleus. It is found in the chromosome. In terms of biological role, core component of nucleosome. Nucleosomes wrap and compact DNA into chromatin, limiting DNA accessibility to the cellular machineries which require DNA as a template. Histones thereby play a central role in transcription regulation, DNA repair, DNA replication and chromosomal stability. DNA accessibility is regulated via a complex set of post-translational modifications of histones, also called histone code, and nucleosome remodeling. The chain is Histone H4 from Eucalyptus globulus (Tasmanian blue gum).